A 1507-amino-acid polypeptide reads, in one-letter code: Protein similar (1507 aa).

The interval 1 to 85 (MVSLIDTIEA…KSRDAARCRR (85 aa)) is disordered. A compositionally biased stretch (low complexity) spans 26–49 (SASSSSCSSSFSSSPPSSSVGSPS). A compositionally biased stretch (basic and acidic residues) spans 72–85 (KRKEKSRDAARCRR). The region spanning 72–125 (KRKEKSRDAARCRRSKETEIFMELSAALPLKTDDVNQLDKASVMRITIAFLKIR) is the bHLH domain. 2 consecutive PAS domains span residues 167–240 (NGAE…LAQK) and 307–377 (PHPS…LSKG). One can recognise a PAC domain in the interval 381–422 (TSRYRFLGKYGGYCWILSQATIVYDKLKPQSVVCVNYVISNL). Disordered regions lie at residues 433-459 (QQTA…KAAD), 541-588 (HSPG…PPPT), 706-832 (TCST…CSPN), and 900-951 (YAGN…QAAV). Over residues 439-459 (EQKEQHHQAAETEKEPEKAAD) the composition is skewed to basic and acidic residues. Positions 548-559 (ITAQLLSGSSSG) are enriched in polar residues. The span at 578–588 (SPAPPLTPPPT) shows a compositional bias: pro residues. An ODD region spans residues 692 to 863 (TCLLPEDINS…IDDDMPLLTE (172 aa)). Positions 706 to 717 (TCSTTASGQHYQ) are enriched in polar residues. Composition is skewed to low complexity over residues 718–745 (SPSS…LSPL) and 754–777 (SNPS…QQQH). Polar residues predominate over residues 803–818 (DTSCSQHLHSPSITSK). 3 stretches are compositionally biased toward low complexity: residues 823–832 (SSLPSLCSPN), 907–918 (QQQQQQPQLQQQ), and 926–951 (SSPA…QAAV). The stretch at 880 to 908 (KEIDAIQQQLQQLQQQHHQQYAGNTGYQQ) forms a coiled coil. Coiled-coil stretches lie at residues 982–1054 (AEEC…YDVQ) and 1110–1162 (QLLQ…QLQQ). Disordered regions lie at residues 1204 to 1228 (PQQQ…VESK), 1251 to 1287 (KDPA…QSNS), and 1356 to 1460 (FGGS…KTSI). Residues 1413-1423 (SSTSNSTNQAE) are compositionally biased toward polar residues.

As to quaternary structure, efficient DNA binding requires dimerization with another bHLH protein. Interacts with Vhl. In terms of tissue distribution, ubiquitously expressed in the embryo.

It is found in the cytoplasm. The protein resides in the nucleus. Functionally, functions as a transcriptional regulator of the adaptive response to hypoxia. Binds to core DNA sequence 5'-[AG]CGTG-3' within the hypoxia response element (HRE) of target gene promoters. The sequence is that of Protein similar (sima) from Drosophila melanogaster (Fruit fly).